The chain runs to 176 residues: Adenine phosphoribosyltransferase (176 aa).

This sequence belongs to the purine/pyrimidine phosphoribosyltransferase family. Homodimer.

It is found in the cytoplasm. The enzyme catalyses AMP + diphosphate = 5-phospho-alpha-D-ribose 1-diphosphate + adenine. The protein operates within purine metabolism; AMP biosynthesis via salvage pathway; AMP from adenine: step 1/1. In terms of biological role, catalyzes a salvage reaction resulting in the formation of AMP, that is energically less costly than de novo synthesis. The protein is Adenine phosphoribosyltransferase of Bacteroides thetaiotaomicron (strain ATCC 29148 / DSM 2079 / JCM 5827 / CCUG 10774 / NCTC 10582 / VPI-5482 / E50).